Reading from the N-terminus, the 211-residue chain is Protein-L-isoaspartate O-methyltransferase (211 aa).

Residue Ser-60 is part of the active site.

Belongs to the methyltransferase superfamily. L-isoaspartyl/D-aspartyl protein methyltransferase family.

It localises to the cytoplasm. The catalysed reaction is [protein]-L-isoaspartate + S-adenosyl-L-methionine = [protein]-L-isoaspartate alpha-methyl ester + S-adenosyl-L-homocysteine. In terms of biological role, catalyzes the methyl esterification of L-isoaspartyl residues in peptides and proteins that result from spontaneous decomposition of normal L-aspartyl and L-asparaginyl residues. It plays a role in the repair and/or degradation of damaged proteins. The protein is Protein-L-isoaspartate O-methyltransferase of Pseudomonas savastanoi pv. phaseolicola (strain 1448A / Race 6) (Pseudomonas syringae pv. phaseolicola (strain 1448A / Race 6)).